A 793-amino-acid chain; its full sequence is Kinesin-like protein KIF3C (793 aa).

A Kinesin motor domain is found at Ala-10–Ile-365. Gly-97 to Thr-104 contributes to the ATP binding site. Disordered stretches follow at residues Glu-251–Lys-288, Glu-395–Glu-423, and Lys-756–Glu-793. Over residues Gly-270–Gly-284 the composition is skewed to gly residues. Positions Lys-376 to Leu-630 form a coiled coil. Positions Met-399–Lys-413 are enriched in basic residues. Residues Lys-631–Glu-793 form a globular region.

Belongs to the TRAFAC class myosin-kinesin ATPase superfamily. Kinesin family. Kinesin II subfamily. As to quaternary structure, heterodimer of KIF3A and KIF3C.

The protein localises to the cytoplasm. Its subcellular location is the cytoskeleton. Its function is as follows. Microtubule-based anterograde translocator for membranous organelles. The protein is Kinesin-like protein KIF3C (KIF3C) of Pongo abelii (Sumatran orangutan).